The chain runs to 433 residues: tRNA (guanine(10)-N(2))-methyltransferase (433 aa).

This sequence belongs to the class I-like SAM-binding methyltransferase superfamily. TRM11 methyltransferase family. In terms of assembly, interacts with TRM112.

The protein localises to the cytoplasm. The enzyme catalyses guanosine(10) in tRNA + S-adenosyl-L-methionine = N(2)-methylguanosine(10) in tRNA + S-adenosyl-L-homocysteine + H(+). In terms of biological role, catalytic subunit of an S-adenosyl-L-methionine-dependent tRNA methyltransferase complex that mediates the methylation of the guanosine nucleotide at position 10 (m2G10) in tRNAs. The chain is tRNA (guanine(10)-N(2))-methyltransferase (TRM11) from Saccharomyces cerevisiae (strain ATCC 204508 / S288c) (Baker's yeast).